Consider the following 377-residue polypeptide: tRNA-queuosine alpha-mannosyltransferase (377 aa).

It belongs to the glycosyltransferase group 1 family. Glycosyltransferase 4 subfamily.

It catalyses the reaction queuosine(34) in tRNA(Asp) + GDP-alpha-D-mannose = O-4''-alpha-D-mannosylqueuosine(34) in tRNA(Asp) + GDP + H(+). Functionally, glycosyltransferase that specifically catalyzes mannosylation of cytoplasmic tRNA(Asp) modified with queuosine at position 34 (queuosine(34)). Mannosylates the cyclopentene moiety of queuosine(34) in tRNA(Asp) to form mannosyl-queuosine(34). The polypeptide is tRNA-queuosine alpha-mannosyltransferase (Drosophila melanogaster (Fruit fly)).